The chain runs to 155 residues: Protein SREK1IP1 (155 aa).

Residues 13-30 (AGCKKCGYPGHLTFECRN) form a CCHC-type zinc finger. A disordered region spans residues 44–155 (VSSTSSEDSD…TPNSSEFSRK (112 aa)). Phosphoserine is present on S52. Residues 66 to 84 (QEKRINEEEEKKKEKSKEK) show a composition bias toward basic and acidic residues. The span at 85-94 (IKLKKKRKRS) shows a compositional bias: basic residues. Phosphoserine occurs at positions 96 and 97. Positions 107–142 (QKKQKYQKKEKKKEKKSKSKKGKHHKKEKKKRKKEK) are enriched in basic residues. Position 146 is a phosphothreonine (T146). Residues 146–155 (TPNSSEFSRK) show a composition bias toward polar residues.

Interacts with SREK1/SFRS12.

In terms of biological role, possible splicing regulator involved in the control of cellular survival. The sequence is that of Protein SREK1IP1 (SREK1IP1) from Homo sapiens (Human).